We begin with the raw amino-acid sequence, 299 residues long: ATP phosphoribosyltransferase (299 aa).

Belongs to the ATP phosphoribosyltransferase family. Long subfamily. It depends on Mg(2+) as a cofactor.

The protein resides in the cytoplasm. It catalyses the reaction 1-(5-phospho-beta-D-ribosyl)-ATP + diphosphate = 5-phospho-alpha-D-ribose 1-diphosphate + ATP. It participates in amino-acid biosynthesis; L-histidine biosynthesis; L-histidine from 5-phospho-alpha-D-ribose 1-diphosphate: step 1/9. Its activity is regulated as follows. Feedback inhibited by histidine. Catalyzes the condensation of ATP and 5-phosphoribose 1-diphosphate to form N'-(5'-phosphoribosyl)-ATP (PR-ATP). Has a crucial role in the pathway because the rate of histidine biosynthesis seems to be controlled primarily by regulation of HisG enzymatic activity. This is ATP phosphoribosyltransferase from Campylobacter jejuni subsp. jejuni serotype O:2 (strain ATCC 700819 / NCTC 11168).